The following is a 234-amino-acid chain: Carboxy-S-adenosyl-L-methionine synthase (234 aa).

Residues tyrosine 35, 60 to 62 (GCS), 109 to 110 (DI), asparagine 124, and arginine 191 contribute to the S-adenosyl-L-methionine site.

The protein belongs to the class I-like SAM-binding methyltransferase superfamily. Cx-SAM synthase family. Homodimer.

It carries out the reaction prephenate + S-adenosyl-L-methionine = carboxy-S-adenosyl-L-methionine + 3-phenylpyruvate + H2O. Its function is as follows. Catalyzes the conversion of S-adenosyl-L-methionine (SAM) to carboxy-S-adenosyl-L-methionine (Cx-SAM). This Campylobacter fetus subsp. fetus (strain 82-40) protein is Carboxy-S-adenosyl-L-methionine synthase.